Here is a 248-residue protein sequence, read N- to C-terminus: Probable transcriptional regulatory protein Bind_0345 (248 aa).

It belongs to the TACO1 family.

The protein localises to the cytoplasm. In Beijerinckia indica subsp. indica (strain ATCC 9039 / DSM 1715 / NCIMB 8712), this protein is Probable transcriptional regulatory protein Bind_0345.